A 246-amino-acid chain; its full sequence is MAGHSKWANIKHRKAAQDAQRGKIFTKLIRELVTAAKIGGGDVSANPRLRSAVDKALSNNMTRDTINRAIERGVGGGDDTNMETKIYEGYGPGGTAVMVECLSDNANRTISQVRPSFTKCGGNLGTEGSVGYLFSKKGLILIASGDEDALTEAAIEAGADDIQPQEDGSFEIYTAWEDLGSVRDGIEAAGFKIQEAEVTMIPSTTVELDAETAPKLLDLINRLEDCDDVQNVYHNGEISDEVAALL.

It belongs to the TACO1 family.

It is found in the cytoplasm. The polypeptide is Probable transcriptional regulatory protein APP7_1210 (Actinobacillus pleuropneumoniae serotype 7 (strain AP76)).